Here is a 525-residue protein sequence, read N- to C-terminus: Light-independent protochlorophyllide reductase subunit B (525 aa).

Asp-36 contacts [4Fe-4S] cluster. The active-site Proton donor is Asp-286. 421–422 (GL) serves as a coordination point for substrate.

Belongs to the ChlB/BchB/BchZ family. In terms of assembly, protochlorophyllide reductase is composed of three subunits; ChlL, ChlN and ChlB. Forms a heterotetramer of two ChlB and two ChlN subunits. It depends on [4Fe-4S] cluster as a cofactor.

The enzyme catalyses chlorophyllide a + oxidized 2[4Fe-4S]-[ferredoxin] + 2 ADP + 2 phosphate = protochlorophyllide a + reduced 2[4Fe-4S]-[ferredoxin] + 2 ATP + 2 H2O. The protein operates within porphyrin-containing compound metabolism; chlorophyll biosynthesis (light-independent). In terms of biological role, component of the dark-operative protochlorophyllide reductase (DPOR) that uses Mg-ATP and reduced ferredoxin to reduce ring D of protochlorophyllide (Pchlide) to form chlorophyllide a (Chlide). This reaction is light-independent. The NB-protein (ChlN-ChlB) is the catalytic component of the complex. The protein is Light-independent protochlorophyllide reductase subunit B of Prochlorococcus marinus (strain NATL2A).